The primary structure comprises 286 residues: Simplagrin (286 aa).

Residues Met-1–Gly-20 form the signal peptide. The interval His-17–Ala-179 is disordered. Acidic residues-rich tracts occupy residues Pro-24–Glu-69 and Val-103–Glu-129. Asn-116 is a glycosylation site (N-linked (GlcNAc...) asparagine). The segment covering Ser-166 to Glu-177 has biased composition (low complexity).

Belongs to the aegyptin family. In terms of assembly, monomeric in solution; likely has an elongated non-globular form. Interacts with human and rat collagens (via a RGQOGVMGF peptide, where O is hydroxyproline). Not glycosylated. In terms of tissue distribution, salivary gland.

The protein localises to the secreted. Its function is as follows. Inhibits host platelet aggregation induced by low concentrations of collagen via blocking the von Willebrand Factor (VWF) interaction with collagen. The polypeptide is Simplagrin (Simulium nigrimanum (Black fly)).